Reading from the N-terminus, the 32-residue chain is Small ribosomal subunit protein uS19 (32 aa).

It belongs to the universal ribosomal protein uS19 family.

Functionally, protein S19 forms a complex with S13 that binds strongly to the 16S ribosomal RNA. The polypeptide is Small ribosomal subunit protein uS19 (rpsS) (Yersinia enterocolitica).